The following is a 337-amino-acid chain: DNA-directed RNA polymerase subunit alpha (337 aa).

Positions 1 to 233 (MVREEIAEST…DLFVPFLHAE (233 aa)) are alpha N-terminal domain (alpha-NTD). The alpha C-terminal domain (alpha-CTD) stretch occupies residues 266-337 (GIPLKYIFID…FAVDLPKVLI (72 aa)).

Belongs to the RNA polymerase alpha chain family. In plastids the minimal PEP RNA polymerase catalytic core is composed of four subunits: alpha, beta, beta', and beta''. When a (nuclear-encoded) sigma factor is associated with the core the holoenzyme is formed, which can initiate transcription.

The protein resides in the plastid. The protein localises to the chloroplast. The catalysed reaction is RNA(n) + a ribonucleoside 5'-triphosphate = RNA(n+1) + diphosphate. In terms of biological role, DNA-dependent RNA polymerase catalyzes the transcription of DNA into RNA using the four ribonucleoside triphosphates as substrates. In Dioscorea elephantipes (Elephant's foot yam), this protein is DNA-directed RNA polymerase subunit alpha.